Consider the following 273-residue polypeptide: Zinc finger protein 80 (273 aa).

2 consecutive C2H2-type zinc fingers follow at residues 49 to 71 and 77 to 99; these read YKCKECGSVFNKNSLLVRHQQIH and YECQECGKAFPEKVDFVRPMRIH. The C2H2-type 3; atypical zinc-finger motif lies at 105-127; sequence CKCVECGKVFNRRSHLLCYRQIH. 4 C2H2-type zinc fingers span residues 133-155, 161-183, 189-211, and 217-239; these read YECSECGKTFSYHSVFIQHRVTH, FGCKECGKTFYYNSSLTRHMKIH, CKCSECGKTFTYRSVFFRHSMTH, and YECKECGKGFYYSYSLTRHTRSH.

The protein belongs to the krueppel C2H2-type zinc-finger protein family.

It localises to the nucleus. Its function is as follows. May be involved in transcriptional regulation. This Homo sapiens (Human) protein is Zinc finger protein 80 (ZNF80).